Reading from the N-terminus, the 216-residue chain is Probable transaldolase (216 aa).

Lys-83 (schiff-base intermediate with substrate) is an active-site residue.

Belongs to the transaldolase family. Type 3B subfamily.

The protein localises to the cytoplasm. It catalyses the reaction D-sedoheptulose 7-phosphate + D-glyceraldehyde 3-phosphate = D-erythrose 4-phosphate + beta-D-fructose 6-phosphate. The protein operates within carbohydrate degradation; pentose phosphate pathway; D-glyceraldehyde 3-phosphate and beta-D-fructose 6-phosphate from D-ribose 5-phosphate and D-xylulose 5-phosphate (non-oxidative stage): step 2/3. In terms of biological role, transaldolase is important for the balance of metabolites in the pentose-phosphate pathway. This is Probable transaldolase from Thermosipho africanus (strain TCF52B).